A 379-amino-acid chain; its full sequence is Leukocyte elastase inhibitor A (379 aa).

Serine 300 bears the Phosphoserine mark. The segment at 351 to 379 (EFTVDHPFIFFIRHNPTSNVLFLGRVCSP) is CARD-binding motif (CBM).

This sequence belongs to the serpin family. Ov-serpin subfamily. In terms of assembly, monomer. Interacts (via C-terminus) with CASP1 and CASP4 (via CARD domain); these interactions regulate the activity of inflammatory caspases. As to expression, ubiquitous with higher expression in pancreas, spleen and bone marrow.

The protein resides in the secreted. Its subcellular location is the cytoplasm. It localises to the cytolytic granule. It is found in the early endosome. In terms of biological role, neutrophil serine protease inhibitor that plays an essential role in the regulation of the innate immune response, inflammation and cellular homeostasis. Acts primarily to protect the cell from proteases released in the cytoplasm during stress or infection. These proteases are important in killing microbes but when released from granules, these potent enzymes also destroy host proteins and contribute to mortality. Regulates the activity of the neutrophil proteases elastase, cathepsin G, proteinase-3, chymase, chymotrypsin, and kallikrein-3. Also acts as a potent intracellular inhibitor of granzyme H. During inflammation, limits the activity of inflammatory caspases CASP1 and CASP4 by suppressing their caspase-recruitment domain (CARD) oligomerization and enzymatic activation. In addition, promotes the proliferation of beta-cells when secreted. The sequence is that of Leukocyte elastase inhibitor A (Serpinb1a) from Mus musculus (Mouse).